The sequence spans 122 residues: Large ribosomal subunit protein uL14 (122 aa).

It belongs to the universal ribosomal protein uL14 family. In terms of assembly, part of the 50S ribosomal subunit. Forms a cluster with proteins L3 and L19. In the 70S ribosome, L14 and L19 interact and together make contacts with the 16S rRNA in bridges B5 and B8.

Binds to 23S rRNA. Forms part of two intersubunit bridges in the 70S ribosome. This chain is Large ribosomal subunit protein uL14, found in Francisella philomiragia subsp. philomiragia (strain ATCC 25017 / CCUG 19701 / FSC 153 / O#319-036).